Here is a 726-residue protein sequence, read N- to C-terminus: Elongation factor 2 (726 aa).

Positions 19–260 (DRIRNIGICA…MVIKHLPSPP (242 aa)) constitute a tr-type G domain. GTP is bound by residues 28 to 35 (AHIDHGKT), 94 to 98 (DTPGH), and 148 to 151 (NKVD). At His-602 the chain carries Diphthamide.

It belongs to the TRAFAC class translation factor GTPase superfamily. Classic translation factor GTPase family. EF-G/EF-2 subfamily.

It localises to the cytoplasm. Functionally, catalyzes the GTP-dependent ribosomal translocation step during translation elongation. During this step, the ribosome changes from the pre-translocational (PRE) to the post-translocational (POST) state as the newly formed A-site-bound peptidyl-tRNA and P-site-bound deacylated tRNA move to the P and E sites, respectively. Catalyzes the coordinated movement of the two tRNA molecules, the mRNA and conformational changes in the ribosome. The polypeptide is Elongation factor 2 (fusA) (Methanocaldococcus jannaschii (strain ATCC 43067 / DSM 2661 / JAL-1 / JCM 10045 / NBRC 100440) (Methanococcus jannaschii)).